A 373-amino-acid polypeptide reads, in one-letter code: Inhibitor of nuclear factor kappa-B kinase-interacting protein (373 aa).

A compositionally biased stretch (basic residues) spans 1-11; that stretch reads MSEVKSRKKPG. Residues 1-38 form a disordered region; the sequence is MSEVKSRKKPGPKVAAPEPEKRSDGRKNPEARGDAGWA. Over residues 18 to 33 the composition is skewed to basic and acidic residues; it reads EPEKRSDGRKNPEARG. Residues 43–59 traverse the membrane as a helical segment; it reads GLSLLSLAMTLGLAWLV. Coiled coils occupy residues 86 to 257 and 285 to 324; these read LQSK…NKLS and QDLIGTERKMEELTMQMFNMEDDMLRAVSEIMEMQKTLEG. The N-linked (GlcNAc...) asparagine glycan is linked to N151.

Post-translationally, N-glycosylated at Asn-151.

Its subcellular location is the endoplasmic reticulum membrane. Target of p53/TP53 with pro-apoptotic function. In Mus musculus (Mouse), this protein is Inhibitor of nuclear factor kappa-B kinase-interacting protein (Ikbip).